Reading from the N-terminus, the 210-residue chain is Protein-methionine-sulfoxide reductase heme-binding subunit MsrQ (210 aa).

6 consecutive transmembrane segments (helical) span residues 8–28, 37–57, 75–95, 110–130, 147–167, and 169–189; these read LAVFLAACIAPVWWLYQAWIF, VLVENFGVATLVMLLITLSMT, LGLWCFAYALLHLSMYALFIL, PYIIVGALALLGLLALAVTSN, IIYVILGLGLLHMFWIVRADL, and EWALYAGIGAFLLLLRIPVFA.

Belongs to the MsrQ family. In terms of assembly, heterodimer of a catalytic subunit (MsrP) and a heme-binding subunit (MsrQ). FMN serves as cofactor. It depends on heme b as a cofactor.

Its subcellular location is the cell inner membrane. In terms of biological role, part of the MsrPQ system that repairs oxidized periplasmic proteins containing methionine sulfoxide residues (Met-O), using respiratory chain electrons. Thus protects these proteins from oxidative-stress damage caused by reactive species of oxygen and chlorine generated by the host defense mechanisms. MsrPQ is essential for the maintenance of envelope integrity under bleach stress, rescuing a wide series of structurally unrelated periplasmic proteins from methionine oxidation. MsrQ provides electrons for reduction to the reductase catalytic subunit MsrP, using the quinone pool of the respiratory chain. In Pseudomonas syringae pv. syringae (strain B728a), this protein is Protein-methionine-sulfoxide reductase heme-binding subunit MsrQ.